A 246-amino-acid polypeptide reads, in one-letter code: Probable transcriptional regulatory protein WD_0484 (246 aa).

Residues 1 to 22 (MAGHSQFSNIKHRKGAQDAKRS) form a disordered region.

The protein belongs to the TACO1 family.

It is found in the cytoplasm. The chain is Probable transcriptional regulatory protein WD_0484 from Wolbachia pipientis wMel.